The chain runs to 174 residues: Cell division protein FtsL (174 aa).

Residues 1–38 (MLAAPRELSYIPQPVVSSKQSPRSGLSNRRRESRARQK) lie on the Cytoplasmic side of the membrane. Residues 39–59 (ILLLGLVLMGFVIGLSLTFLT) traverse the membrane as a helical segment. At 60-174 (MQVLIKGYKI…EPARQAGAGV (115 aa)) the chain is on the extracellular side.

It belongs to the FtsL family.

The protein localises to the cell membrane. Functionally, essential cell division protein. This chain is Cell division protein FtsL, found in Moorella thermoacetica (strain ATCC 39073 / JCM 9320).